Reading from the N-terminus, the 337-residue chain is Transaldolase (337 aa).

Positions 1–10 match the Nuclear localization signal motif; the sequence is MSGSPVKRQR. The active-site Schiff-base intermediate with substrate is the Lys-142. Lys-219 is modified (N6-acetyllysine). Residues Ser-237 and Ser-256 each carry the phosphoserine modification. Lys-269, Lys-286, and Lys-321 each carry N6-acetyllysine.

The protein belongs to the transaldolase family. Type 1 subfamily. As to quaternary structure, homodimer. Interacts with KPNA1 and KPNA4.

The protein resides in the nucleus. Its subcellular location is the cytoplasm. The catalysed reaction is D-sedoheptulose 7-phosphate + D-glyceraldehyde 3-phosphate = D-erythrose 4-phosphate + beta-D-fructose 6-phosphate. It participates in carbohydrate degradation; pentose phosphate pathway; D-glyceraldehyde 3-phosphate and beta-D-fructose 6-phosphate from D-ribose 5-phosphate and D-xylulose 5-phosphate (non-oxidative stage): step 2/3. Functionally, catalyzes the rate-limiting step of the non-oxidative phase in the pentose phosphate pathway. Catalyzes the reversible conversion of sedheptulose-7-phosphate and D-glyceraldehyde 3-phosphate into erythrose-4-phosphate and beta-D-fructose 6-phosphate. This is Transaldolase (TALDO1) from Sus scrofa (Pig).